Consider the following 130-residue polypeptide: MSVVPKDLKYSREHEWIKVDGNIGIIGITDFAQKSLGDIVFIELPGVGDEISAGDSFGVVESVKAASDLYAPVSGKVVEVNEEVIESPQLVNEDPYGKGWMIKVEISNEAELDELLSPEDYEKLLEEEGE.

A Lipoyl-binding domain is found at 23 to 105 (IGIIGITDFA…YGKGWMIKVE (83 aa)). Lys64 is modified (N6-lipoyllysine).

This sequence belongs to the GcvH family. The glycine cleavage system is composed of four proteins: P, T, L and H. Requires (R)-lipoate as cofactor.

Its function is as follows. The glycine cleavage system catalyzes the degradation of glycine. The H protein shuttles the methylamine group of glycine from the P protein to the T protein. In Carboxydothermus hydrogenoformans (strain ATCC BAA-161 / DSM 6008 / Z-2901), this protein is Glycine cleavage system H protein.